The sequence spans 335 residues: Probable geranylgeranyl transferase type-2 subunit beta (335 aa).

5 PFTB repeats span residues 74 to 115 (TEEI…IIFN), 122 to 163 (ADTI…HLLG), 170 to 211 (IDSA…AIAG), 218 to 259 (RDRT…AILG), and 266 to 312 (SDAM…DDTL). Geranylgeranyl diphosphate-binding positions include 196 to 198 (HSG) and 238 to 250 (RPEK…YSWW). Positions 244, 246, and 296 each coordinate Zn(2+).

Belongs to the protein prenyltransferase subunit beta family. In terms of assembly, heterodimer of an alpha and a beta subunit. Zn(2+) serves as cofactor.

It catalyses the reaction geranylgeranyl diphosphate + L-cysteinyl-[protein] = S-geranylgeranyl-L-cysteinyl-[protein] + diphosphate. Catalyzes the transfer of a geranyl-geranyl moiety from geranyl-geranyl pyrophosphate to both cysteines in Rab proteins with an -XXCC, -XCXC and -CCXX C-terminal. The polypeptide is Probable geranylgeranyl transferase type-2 subunit beta (ggtb-1) (Caenorhabditis elegans).